A 357-amino-acid chain; its full sequence is DNA integrity scanning protein DisA (357 aa).

A DAC domain is found at 8–146 (VKSIINILQL…GNLRYTLKDI (139 aa)). ATP is bound by residues G75, L93, and 106–110 (MRHRT).

It belongs to the DisA family. As to quaternary structure, homooctamer. The cofactor is Mg(2+).

The catalysed reaction is 2 ATP = 3',3'-c-di-AMP + 2 diphosphate. Functionally, participates in a DNA-damage check-point that is active prior to asymmetric division when DNA is damaged. DisA forms globular foci that rapidly scan along the chromosomes during sporulation, searching for lesions. When a lesion is present, DisA pauses at the lesion site. This triggers a cellular response that culminates in a temporary block in sporulation initiation. Also has diadenylate cyclase activity, catalyzing the condensation of 2 ATP molecules into cyclic di-AMP (c-di-AMP). c-di-AMP acts as a signaling molecule that couples DNA integrity with progression of sporulation. The rise in c-di-AMP level generated by DisA while scanning the chromosome, operates as a positive signal that advances sporulation; upon encountering a lesion, the DisA focus arrests at the damaged site and halts c-di-AMP synthesis. The protein is DNA integrity scanning protein DisA of Bacillus cereus (strain B4264).